A 523-amino-acid polypeptide reads, in one-letter code: Calcium and calcium/calmodulin-dependent serine/threonine-protein kinase DMI-3 (523 aa).

Residues 12-306 (YEVSEILGRG…ALELLSDPWV (295 aa)) enclose the Protein kinase domain. ATP is bound by residues 18–26 (LGRGGFSVV) and lysine 47. Aspartate 171 functions as the Proton acceptor in the catalytic mechanism. Phosphothreonine is present on threonine 271. The tract at residues 329-342 (ARRKLRAAAIASVW) is calmodulin-binding. 3 EF-hand domains span residues 400–435 (SLIP…LKNS), 436–471 (KGED…LPYD), and 478–513 (TEPG…DSSL). Ca(2+)-binding residues include aspartate 413, asparagine 415, aspartate 417, threonine 419, glutamate 424, aspartate 449, aspartate 451, serine 453, cysteine 455, glutamate 460, aspartate 491, asparagine 493, aspartate 495, lysine 497, and glutamate 502.

The protein belongs to the protein kinase superfamily. CAMK Ser/Thr protein kinase family. CaMK subfamily. As to quaternary structure, interacts with IPD3. In terms of processing, autophosphorylation. As to expression, highly expressed in roots. Expressed in root hairs and nodules. Expressed at low levels in flowers. Not detected in leaves or stems.

It localises to the nucleus. It catalyses the reaction L-seryl-[protein] + ATP = O-phospho-L-seryl-[protein] + ADP + H(+). The catalysed reaction is L-threonyl-[protein] + ATP = O-phospho-L-threonyl-[protein] + ADP + H(+). With respect to regulation, activated by calcium. Autophosphorylation may play an important role in the regulation of the kinase activity. Its function is as follows. During nodulation, plays a central role in bacterial infection and contributes to nodule organogenesis. Protein kinase that recognizes the calcium spiking induced by Nod factors and translates this signal to components controlling nodulation and mycorrhizal infection responses. May phosphorylate the NSP1 protein. Required in epidermal and cortical cells to promote infection thread (IT) formation in root hairs. This chain is Calcium and calcium/calmodulin-dependent serine/threonine-protein kinase DMI-3, found in Medicago truncatula (Barrel medic).